A 1465-amino-acid chain; its full sequence is DNA polymerase III PolC-type (1465 aa).

Residues 427–583 enclose the Exonuclease domain; it reads YVVFDVETTG…YDAEATGRLL (157 aa).

This sequence belongs to the DNA polymerase type-C family. PolC subfamily.

The protein resides in the cytoplasm. The catalysed reaction is DNA(n) + a 2'-deoxyribonucleoside 5'-triphosphate = DNA(n+1) + diphosphate. Functionally, required for replicative DNA synthesis. This DNA polymerase also exhibits 3' to 5' exonuclease activity. In Streptococcus pyogenes serotype M5 (strain Manfredo), this protein is DNA polymerase III PolC-type.